We begin with the raw amino-acid sequence, 110 residues long: N(4)-acetylcytidine amidohydrolase (110 aa).

Positions 6–93 constitute an ASCH domain; that stretch reads TFFERFEQDI…IQEIYPGLEQ (88 aa). Lys-20 serves as the catalytic Proton acceptor. Residue Thr-23 is the Nucleophile of the active site. The active-site Proton donor is the Glu-73.

It belongs to the N(4)-acetylcytidine amidohydrolase family.

The enzyme catalyses N(4)-acetylcytidine + H2O = cytidine + acetate + H(+). It carries out the reaction N(4)-acetyl-2'-deoxycytidine + H2O = 2'-deoxycytidine + acetate + H(+). The catalysed reaction is N(4)-acetylcytosine + H2O = cytosine + acetate + H(+). Functionally, catalyzes the hydrolysis of N(4)-acetylcytidine (ac4C). The chain is N(4)-acetylcytidine amidohydrolase from Shewanella sp. (strain ANA-3).